The primary structure comprises 340 residues: Speriolin-like protein (340 aa).

Disordered stretches follow at residues 42–73 and 94–135; these read GGGHDLLPPRAHAYPEAGSPGSGVPDFGRFTS and APLS…KLSP. Serine 60 bears the Phosphoserine mark. The span at 123–133 shows a compositional bias: basic and acidic residues; that stretch reads PHSHRGTDRKL. The residue at position 134 (serine 134) is a Phosphoserine.

It belongs to the speriolin family.

The protein localises to the cytoplasm. The sequence is that of Speriolin-like protein (SPATC1L) from Homo sapiens (Human).